The primary structure comprises 377 residues: Caspase-4 (377 aa).

The tract at residues 1–59 is required for LPS-binding; it reads MAEGNHRKKPLKVLESLGKDFLTGVLDNLVEQNVLNWKEEEKKKYYDAKTEDKVRVMAD. A propeptide spanning residues 1–80 is cleaved from the precursor; the sequence is MAEGNHRKKP…MLLQTFFNID (80 aa). Residues 1-91 enclose the CARD domain; the sequence is MAEGNHRKKP…ISPNKKAHPN (91 aa). A2 carries the N-acetylalanine modification. The residue at position 83 (S83) is a Phosphoserine. The segment at 84–104 is disordered; that stretch reads PNKKAHPNMEAGPPESGESTD. Active-site residues include H210 and C258. Positions 271–289 are excised as a propeptide; sequence SPASLEVASSQSSENLEED. The residue at position 314 (R314) is a (Microbial infection) ADP-riboxanated arginine.

It belongs to the peptidase C14A family. As to quaternary structure, heterotetramer that consists of two anti-parallel arranged heterodimers, each one formed by a 20 kDa (Caspase-4 subunit p20) and a 10 kDa (Caspase-4 subunit p10) subunit. Upon direct LPS-binding, forms large homooligomers, resulting in its activation. These oligomers are often referred to as 'non-canonical inflammasomes'. In its precursor form, interacts with TMEM214; this interaction is required for association with the endoplasmic reticulum membrane. Interacts with CASP1. Interacts with NOD2. Interacts with SERPINB1; this interaction regulates CASP4 activity. In terms of assembly, heterotetramer that consists of two anti-parallel arranged heterodimers, each one formed by a 20 kDa (Caspase-4 subunit p20) and a 10 kDa (Caspase-4 subunit p10) subunit. (Microbial infection) Interacts with NleF protein from pathogenic E.coli; this interaction leads to enzyme inhibition. As to quaternary structure, (Microbial infection) Interacts with cathepsin CTSG; the interaction is promoted by the Td92 surface protein of the periodontal pathogen T.denticola and leads to CASP4 activation. Post-translationally, in response to activation signals, undergoes autoproteolytic cleavage and activation. In terms of processing, (Microbial infection) ADP-riboxanation by S.flexneri OspC3 blocks CASP4 autoprocessing, preventing CASP4 activation and ability to recognize and cleave GSDMD, thereby thwarting the inflammasome/pyroptosis-mediated defense. As to expression, widely expressed, including in keratinocytes and colonic and small intestinal epithelial cells (at protein level). Not detected in brain.

It is found in the cytoplasm. The protein resides in the cytosol. The protein localises to the endoplasmic reticulum membrane. It localises to the mitochondrion. Its subcellular location is the inflammasome. It is found in the secreted. It carries out the reaction Strict requirement for Asp at the P1 position. It has a preferred cleavage sequence of Tyr-Val-Ala-Asp-|- but also cleaves at Asp-Glu-Val-Asp-|-.. With respect to regulation, activated by homooligomerization induced by direct binding to cytosolic LPS, in a TLR4-independent manner. In addition to LPS, CASP4/CASP11 may also be activated by oxidized phospholipid 1-palmitoyl-2-arachidonoyl- sn-glycero-3-phosphorylcholine, an oxidized phospholipid (oxPAPC), in dendritic cells, promoting adaptive immunity. The role of oxPAPC is however unclear and another report suggests that oxPAPC competes with LPS-binding and inhibits the non-canonical inflammasome in macrophages. Its function is as follows. Inflammatory caspase that acts as the effector of the non-canonical inflammasome by mediating lipopolysaccharide (LPS)-induced pyroptosis. Also indirectly activates the NLRP3 and NLRP6 inflammasomes. Acts as a thiol protease that cleaves a tetrapeptide after an Asp residue at position P1: catalyzes cleavage of CGAS, GSDMD and IL18. Effector of the non-canonical inflammasome independently of NLRP3 inflammasome and CASP1: the non-canonical inflammasome promotes pyroptosis through GSDMD cleavage without involving secretion of cytokine IL1B. In the non-canonical inflammasome, CASP4 is activated by direct binding to the lipid A moiety of LPS without the need of an upstream sensor. LPS-binding promotes CASP4 activation and CASP4-mediated cleavage of GSDMD and IL18, followed by IL18 secretion through the GSDMD pore, pyroptosis of infected cells and their extrusion into the gut lumen. Also indirectly promotes secretion of mature cytokines (IL1A and HMGB1) downstream of GSDMD-mediated pyroptosis via activation of the NLRP3 and NLRP6 inflammasomes. Involved in NLRP3-dependent CASP1 activation and IL1B secretion in response to non-canonical activators, such as UVB radiation or cholera enterotoxin. Involved in NLRP6 inflammasome-dependent activation in response to lipoteichoic acid (LTA), a cell-wall component of Gram-positive bacteria, which leads to CASP1 activation and IL1B secretion. Involved in LPS-induced IL6 secretion; this activity may not require caspase enzymatic activity. The non-canonical inflammasome is required for innate immunity to cytosolic, but not vacuolar, bacteria. Plays a crucial role in the restriction of S.typhimurium replication in colonic epithelial cells during infection. Activation of the non-canonical inflammasome in brain endothelial cells can lead to excessive pyroptosis, leading to blood-brain barrier breakdown. Pyroptosis limits bacterial replication, while cytokine secretion promotes the recruitment and activation of immune cells and triggers mucosal inflammation. May also act as an activator of adaptive immunity in dendritic cells, following activation by oxidized phospholipid 1-palmitoyl-2-arachidonoyl- sn-glycero-3-phosphorylcholine, an oxidized phospholipid (oxPAPC). Involved in cell death induced by endoplasmic reticulum stress and by treatment with cytotoxic APP peptides found in Alzheimer's patient brains. Cleavage of GSDMD is not strictly dependent on the consensus cleavage site but depends on an exosite interface on CASP4 that recognizes and binds the Gasdermin-D, C-terminal (GSDMD-CT) part. Catalyzes cleavage and maturation of IL18; IL18 processing also depends of the exosite interface on CASP4. In contrast, it does not directly process IL1B. During non-canonical inflammasome activation, cuts CGAS and may play a role in the regulation of antiviral innate immune activation. Functionally, (Microbial infection) In response to the Td92 surface protein of the periodontal pathogen T.denticola, activated by cathepsin CTSG which leads to production and secretion of IL1A and pyroptosis of gingival fibroblasts. The polypeptide is Caspase-4 (Homo sapiens (Human)).